A 365-amino-acid polypeptide reads, in one-letter code: Anhydro-N-acetylmuramic acid kinase (365 aa).

Residue 12–19 participates in ATP binding; that stretch reads GTSMDGMD.

This sequence belongs to the anhydro-N-acetylmuramic acid kinase family.

The catalysed reaction is 1,6-anhydro-N-acetyl-beta-muramate + ATP + H2O = N-acetyl-D-muramate 6-phosphate + ADP + H(+). The protein operates within amino-sugar metabolism; 1,6-anhydro-N-acetylmuramate degradation. Its pathway is cell wall biogenesis; peptidoglycan recycling. Functionally, catalyzes the specific phosphorylation of 1,6-anhydro-N-acetylmuramic acid (anhMurNAc) with the simultaneous cleavage of the 1,6-anhydro ring, generating MurNAc-6-P. Is required for the utilization of anhMurNAc either imported from the medium or derived from its own cell wall murein, and thus plays a role in cell wall recycling. The protein is Anhydro-N-acetylmuramic acid kinase of Pseudomonas paraeruginosa (strain DSM 24068 / PA7) (Pseudomonas aeruginosa (strain PA7)).